The following is a 50-amino-acid chain: Protease inhibitor 2 (50 aa).

The Kazal-like domain maps to 2 to 50 (EDCVGRKACTREWYPVCGSDGVTYSNPCNFSAQQEQCDPNITIAHMGEC). Cystine bridges form between Cys10/Cys29 and Cys18/Cys50. N-linked (GlcNAc...) asparagine glycosylation is found at Asn30 and Asn41.

Its function is as follows. Serine protease inhibitor. Strongly inhibits human neutrophil elastase and trypsin, also inhibits porcine pancreatic elastase and subtilisin A. Does not inhibit chymotrypsin, plasma kallikrein, pancreatic kallikrein, thrombin or papain. This Cenchritis muricatus (Beaded periwinkle) protein is Protease inhibitor 2.